A 421-amino-acid chain; its full sequence is Trimethyllysine dioxygenase, mitochondrial (421 aa).

A mitochondrion-targeting transit peptide spans 1–15; it reads MWYHKLLHQQSRLRN. An N6-acetyllysine mark is found at Lys179 and Lys236. The Fe cation site is built by His242, Asp244, and His389.

The protein belongs to the gamma-BBH/TMLD family. Homodimer. It depends on Fe(2+) as a cofactor. L-ascorbate serves as cofactor.

The protein resides in the mitochondrion matrix. The enzyme catalyses N(6),N(6),N(6)-trimethyl-L-lysine + 2-oxoglutarate + O2 = (3S)-3-hydroxy-N(6),N(6),N(6)-trimethyl-L-lysine + succinate + CO2. It functions in the pathway amine and polyamine biosynthesis; carnitine biosynthesis. Converts trimethyllysine (TML) into hydroxytrimethyllysine (HTML). This Mus musculus (Mouse) protein is Trimethyllysine dioxygenase, mitochondrial (Tmlhe).